Reading from the N-terminus, the 63-residue chain is uncharacterized protein (63 aa).

This is an uncharacterized protein from Thermoproteus tenax (TTV1).